The sequence spans 446 residues: D(1A) dopamine receptor (446 aa).

The Extracellular portion of the chain corresponds to 1–22; the sequence is MAPNTSTMDEAGLPAERDFSFR. N-linked (GlcNAc...) asparagine glycosylation is present at asparagine 4. Residues 23–48 form a helical membrane-spanning segment; it reads ILTACFLSLLILSTLLGNTLVCAAVI. Topologically, residues 49-59 are cytoplasmic; sequence RFRHLRSKVTN. A helical transmembrane segment spans residues 60–86; that stretch reads FFVISLAVSDLLVAVLVMPWKAVAEIA. Over 87–95 the chain is Extracellular; that stretch reads GFWPLGPFC. The cysteines at positions 95 and 186 are disulfide-linked. A helical transmembrane segment spans residues 96–118; it reads NIWVAFDIMCSTASILNLCVISV. Residues 119–137 lie on the Cytoplasmic side of the membrane; that stretch reads DRYWAISSPFQYERKMTPK. Residues 138–162 form a helical membrane-spanning segment; the sequence is AAFILISVAWTLSVLISFIPVQLSW. Residues 163-192 lie on the Extracellular side of the membrane; it reads HKAKPTWPLDGNFTSLEDTEDDNCDTRLSR. A helical membrane pass occupies residues 193 to 218; that stretch reads TYAISSSLISFYIPVAIMIVTYTSIY. The Cytoplasmic segment spans residues 219–272; it reads RIAQKQIRRISALERAAVHAKNCQTTAGNGNPVECAQSESSFKMSFKRETKVLK. Residues 273–299 traverse the membrane as a helical segment; it reads TLSVIMGVFVCCWLPFFISNCMVPFCG. Over 300–312 the chain is Extracellular; sequence SEETQPFCIDSIT. The helical transmembrane segment at 313–337 threads the bilayer; that stretch reads FDVFVWFGWANSSLNPIIYAFNADF. Residues 338–446 lie on the Cytoplasmic side of the membrane; the sequence is QKAFSTLLGC…PVTHSGQHST (109 aa). Residues cysteine 347 and cysteine 351 are each lipidated (S-palmitoyl cysteine).

Belongs to the G-protein coupled receptor 1 family. Interacts with DNAJC14 via its C-terminus PubMed:11331877. Interacts with DRD2. Interacts with DORIP1. N-glycosylated. As to expression, brain, in the striatum, the nucleus accumbens, and the olfactory tubercle.

The protein localises to the cell membrane. It localises to the endoplasmic reticulum membrane. It is found in the cell projection. The protein resides in the dendrite. Its subcellular location is the cilium membrane. The protein localises to the dendritic spine. In terms of biological role, dopamine receptor whose activity is mediated by G proteins which activate adenylyl cyclase. This is D(1A) dopamine receptor (Drd1) from Rattus norvegicus (Rat).